Reading from the N-terminus, the 584-residue chain is Vesicular glutamate transporter 2.1 (584 aa).

The Cytoplasmic segment spans residues 1–70; it reads METPREPAGF…CTCFGLPRRY (70 aa). The chain crosses the membrane as a helical span at residues 71-91; sequence IIAIMSGLGFCISFGIRCNLG. Residues 92-124 are Vesicular-facing; that stretch reads VAIVSMVNNSTIHLNGKIIIKEKAKFNWDPETV. Asparagine 99 and asparagine 100 each carry an N-linked (GlcNAc...) asparagine glycan. A helical transmembrane segment spans residues 125 to 145; the sequence is GLIHGSFFWGYIVTQIPGGYI. Over 146–148 the chain is Cytoplasmic; it reads SSR. A helical transmembrane segment spans residues 149–169; that stretch reads LAANRVFGAAILLTSTLNMFI. Residues 170–177 are Vesicular-facing; it reads PSAARGHY. Residues 178–198 traverse the membrane as a helical segment; sequence GCVIFVRILQGLVEGVTYPAC. Over 199-216 the chain is Cytoplasmic; the sequence is HGIWSKWAPPLERSRLAT. The chain crosses the membrane as a helical span at residues 217–237; it reads TSFCGSYAGAVIAMPLAGILV. Topologically, residues 238 to 244 are vesicular; the sequence is QYTGWSS. A helical transmembrane segment spans residues 245-265; it reads VFYVYGCFGIFWYMFWILVSY. Residues 266-310 lie on the Cytoplasmic side of the membrane; it reads ESPAEHPTITAEERCYIEESIGESAKLLGPADKFKTPWRKFFTSM. The helical transmembrane segment at 311-331 threads the bilayer; sequence PVYAIIVANFCRSWTFYLLLI. Residues 332 to 349 are Vesicular-facing; the sequence is SQPAYFEEVFGFEISKVG. A helical membrane pass occupies residues 350 to 370; it reads MLSALPHLVMTIIVPIGGQLA. Residues 371–386 are Cytoplasmic-facing; the sequence is DHLRSKNILSTTTVRK. Residues 387–407 form a helical membrane-spanning segment; sequence IMNCGGFGMEATLLLIVGYSH. The Vesicular segment spans residues 408-409; sequence SK. The chain crosses the membrane as a helical span at residues 410–430; the sequence is GVAISFLVLAVGFSGFAISGF. Residues 431–445 lie on the Cytoplasmic side of the membrane; that stretch reads NVNHLDIAPRYASIL. Residues 446 to 466 form a helical membrane-spanning segment; sequence MGISNGVGTLSGMVCPLIVGA. Over 467–477 the chain is Vesicular; the sequence is MTKHKTREEWQ. The chain crosses the membrane as a helical span at residues 478–498; it reads YVFLIASLVHYGGVIFYGIFA. The Cytoplasmic segment spans residues 499–584; the sequence is SGEKQPWADP…YGYRQGGNYS (86 aa).

Belongs to the major facilitator superfamily. Sodium/anion cotransporter family. VGLUT subfamily. As to expression, expressed in spinal cord and retinal ganglion cells.

The protein localises to the cytoplasmic vesicle. It localises to the secretory vesicle. Its subcellular location is the synaptic vesicle membrane. It is found in the membrane. The protein resides in the synapse. The protein localises to the synaptosome. It localises to the cell membrane. The enzyme catalyses L-glutamate(out) = L-glutamate(in). It carries out the reaction 3 Na(+)(out) + phosphate(out) = 3 Na(+)(in) + phosphate(in). The catalysed reaction is phosphate(in) = phosphate(out). It catalyses the reaction K(+)(in) + H(+)(out) = K(+)(out) + H(+)(in). The enzyme catalyses chloride(in) = chloride(out). Its activity is regulated as follows. Chloride channel activity is allosterically activated by lumenal H(+) and Cl(-) leading to synaptic vesicles acidification. The L-glutamate transport activity is allosterically activated by lumenal H(+) and Cl(-). The allosteric requirement for H(+) efficiently prevents non-vesicular efflux across the plasma membrane. The L-glutamate uniporter activity exhibits a biphasic dependence on chloride concentration. In terms of biological role, multifunctional transporter that transports L-glutamate as well as multiple ions such as chloride, proton, potassium, sodium and phosphate. At the synaptic vesicle membrane, mainly functions as a uniporter which transports preferentially L-glutamate but also, phosphate from the cytoplasm into synaptic vesicles at presynaptic nerve terminals of excitatory neural cells. The L-glutamate or phosphate uniporter activity is electrogenic and is driven by the proton electrochemical gradient, mainly by the electrical gradient established by the vacuolar H(+)-ATPase across the synaptic vesicle membrane. In addition, functions as a chloride channel that allows a chloride permeation through the synaptic vesicle membrane therefore affects the proton electrochemical gradient and promotes synaptic vesicles acidification. Moreover, functions as a vesicular K(+)/H(+) antiport allowing to maintain the electrical gradient and to decrease chemical gradient and therefore sustain vesicular L-glutamate uptake. The vesicular H(+)/H(+) antiport activity is electroneutral. At the plasma membrane, following exocytosis, functions as a symporter of Na(+) and phosphate from the extracellular space to the cytoplasm allowing synaptic phosphate homeostasis regulation. The symporter activity is driven by an inside negative membrane potential and is electrogenic. Also involved in the regulation of retinal hyaloid vessel regression during postnatal development. May also play a role in the endocrine L-glutamatergic system of other tissues such as pineal gland and pancreas. Required for glutamate release by retinotectal synapses and visual acuity. The chain is Vesicular glutamate transporter 2.1 (slc17a6b) from Danio rerio (Zebrafish).